Reading from the N-terminus, the 778-residue chain is MDKNKIMGLTQREVKERQAEGLVNDFTASASTSTWQIVKRNVFTLFNALNFAIALALAFVQAWSNLVFFAVICFNAFSGIVTELRAKHMVDKLNLMTKEKVKTIRDGQEVALNPEELVLGDVIRLSAGEQIPSDALVLEGFAEVNEAMLTGESDLVQKEVDGLLLSGSFLASGSVLSQVHHVGADNYAAKLMLEAKTVKPINSRIMKSLDKLAGFTGKIIIPFGLALLLEALLLKGLPLKSSVVNSSTALLGMLPKGIALLTITSLLTAVIKLGLKKVLVQEMYSVETLARVDMLCLDKTGTITQGKMQVEAVLPLTETYGEEAIASILTSYMAHSEDKNPTAQAIRQRFVGDVAYPMISNLPFSSDRKWGAMELEGLGTVFLGAPEMLLDSEVPEAREALERGSRVLVLALSQEKLDHHKPQKPSDIQALALLEILDPIREGAAETLDYLRSQEVGLKIISGDNPVTVSSIAQKAGFADYHSYVDCSKITDEELMAMAEETAIFGRVSPHQKKLIIQTLKKAGHTTAMTGDGVNDILALREADCSIVMAEGDPATRQIANLVLLNSDFNDVPEILFEGRRVVNNIAHIAPIFLIKTIYSFLLAVICIASALLGRSEWILIFPFIPIQITMIDQFVEGFPPFVLTFERNIKPVEQNFLRKSMLRALPSALMVVFSVLFVKMFGASQGWSELEISTLLYYLLGSIGFLSVFRACMPFTLWRVLLIVWSVGGFLATALFPRIQKLLEISTLTEQTLPVYGVMMLVFTVIFILTSRYQAKK.

Topologically, residues 1–37 are cytoplasmic; that stretch reads MDKNKIMGLTQREVKERQAEGLVNDFTASASTSTWQI. A helical transmembrane segment spans residues 38-57; the sequence is VKRNVFTLFNALNFAIALAL. Residues 58–64 lie on the Extracellular side of the membrane; that stretch reads AFVQAWS. A helical membrane pass occupies residues 65 to 84; that stretch reads NLVFFAVICFNAFSGIVTEL. The Cytoplasmic segment spans residues 85–209; sequence RAKHMVDKLN…PINSRIMKSL (125 aa). Residues 210–229 form a helical membrane-spanning segment; it reads DKLAGFTGKIIIPFGLALLL. Topologically, residues 230-242 are extracellular; it reads EALLLKGLPLKSS. Residues 243–260 form a helical membrane-spanning segment; that stretch reads VVNSSTALLGMLPKGIAL. Residues 261-586 lie on the Cytoplasmic side of the membrane; sequence LTITSLLTAV…FEGRRVVNNI (326 aa). D298 (4-aspartylphosphate intermediate) is an active-site residue. Residues D532 and D536 each coordinate Mg(2+). The chain crosses the membrane as a helical span at residues 587–606; it reads AHIAPIFLIKTIYSFLLAVI. Topologically, residues 607 to 624 are extracellular; sequence CIASALLGRSEWILIFPF. A helical membrane pass occupies residues 625-645; it reads IPIQITMIDQFVEGFPPFVLT. Over 646 to 663 the chain is Cytoplasmic; it reads FERNIKPVEQNFLRKSML. Residues 664–684 traverse the membrane as a helical segment; sequence RALPSALMVVFSVLFVKMFGA. The Extracellular segment spans residues 685–689; that stretch reads SQGWS. Residues 690 to 708 form a helical membrane-spanning segment; it reads ELEISTLLYYLLGSIGFLS. Topologically, residues 709–716 are cytoplasmic; it reads VFRACMPF. Residues 717–739 traverse the membrane as a helical segment; sequence TLWRVLLIVWSVGGFLATALFPR. Over 740–757 the chain is Extracellular; sequence IQKLLEISTLTEQTLPVY. A helical membrane pass occupies residues 758-777; sequence GVMMLVFTVIFILTSRYQAK. K778 is a topological domain (cytoplasmic).

Belongs to the cation transport ATPase (P-type) (TC 3.A.3) family.

The protein localises to the cell membrane. It catalyses the reaction ATP + H2O = ADP + phosphate + H(+). The chain is Probable cation-transporting ATPase exp7 (exp7) from Streptococcus pneumoniae serotype 4 (strain ATCC BAA-334 / TIGR4).